We begin with the raw amino-acid sequence, 381 residues long: Phenylalanine dehydrogenase (381 aa).

Arg-55 is a binding site for NAD(+). Lys-79 is a binding site for L-phenylalanine. Lys-91 is an active-site residue. NAD(+) is bound by residues Asp-126, Ser-157, Thr-161, Gly-191–Tyr-197, Asp-214–Ile-215, Ala-254–Met-255, and Ser-275–Asn-277. Residue Asn-277 coordinates L-phenylalanine.

This sequence belongs to the Glu/Leu/Phe/Val dehydrogenases family.

The enzyme catalyses L-phenylalanine + NAD(+) + H2O = 3-phenylpyruvate + NH4(+) + NADH + H(+). The protein operates within amino-acid biosynthesis; L-phenylalanine biosynthesis; L-phenylalanine from phenylpyruvate (PDH route): step 1/1. Catalyzes the reversible NAD(+)-dependent oxidative deamination of L-phenylalanine to phenylpyruvate. This is Phenylalanine dehydrogenase from Lysinibacillus sphaericus (Bacillus sphaericus).